The chain runs to 250 residues: tRNA (guanine-N(1)-)-methyltransferase (250 aa).

S-adenosyl-L-methionine is bound by residues Gly112 and 132–137 (IGDFVL).

The protein belongs to the RNA methyltransferase TrmD family. As to quaternary structure, homodimer.

It localises to the cytoplasm. It carries out the reaction guanosine(37) in tRNA + S-adenosyl-L-methionine = N(1)-methylguanosine(37) in tRNA + S-adenosyl-L-homocysteine + H(+). In terms of biological role, specifically methylates guanosine-37 in various tRNAs. This chain is tRNA (guanine-N(1)-)-methyltransferase, found in Marinomonas sp. (strain MWYL1).